Reading from the N-terminus, the 190-residue chain is DNA dC-&gt;dU-editing enzyme APOBEC-3C (190 aa).

Residues 29–138 enclose the CMP/dCMP-type deaminase domain; sequence DRNETWLCFT…PCYQEGLRSL (110 aa). Residues 40–86 form a (Microbial infection) Required for interaction with human foamy virus protein Bet region; the sequence is EGIKRRSVVSWKTGVFRNQVDSETHCHAERCFLSWFCDDILSPNTKY. His66 contributes to the Zn(2+) binding site. Residue Glu68 is the Proton donor of the active site. The Zn(2+) site is built by Cys97 and Cys100.

Belongs to the cytidine and deoxycytidylate deaminase family. As to quaternary structure, homodimer. Interacts with TRIB3. Interacts with AGO2. (Microbial infection) Interacts with human foamy virus protein Bet; this interaction does not induce APOBEC3C degradation but prevents its dimerization and incorporation into the virion by binding of Bet close to or within the APOBEC3C dimerization site. In terms of assembly, (Microbial infection) Interacts with HIV-1 Vif. The cofactor is Zn(2+). As to expression, expressed in spleen, testes, peripherical blood lymphocytes, heart, thymus, prostate and ovary.

The protein resides in the nucleus. Its subcellular location is the cytoplasm. It carries out the reaction a 2'-deoxycytidine in single-stranded DNA + H2O + H(+) = a 2'-deoxyuridine in single-stranded DNA + NH4(+). With respect to regulation, (Microbial infection) Antiviral activity is neutralized by the HIV-1 virion infectivity factor (Vif), that prevents its incorporation into progeny HIV-1 virions by both inhibiting its translation and/or by inducing its ubiquitination and subsequent degradation by the 26S proteasome. In terms of biological role, DNA deaminase (cytidine deaminase) which acts as an inhibitor of retrovirus replication and retrotransposon mobility via deaminase-dependent and -independent mechanisms. After the penetration of retroviral nucleocapsids into target cells of infection and the initiation of reverse transcription, it can induce the conversion of cytosine to uracil in the minus-sense single-strand viral DNA, leading to G-to-A hypermutations in the subsequent plus-strand viral DNA. The resultant detrimental levels of mutations in the proviral genome, along with a deamination-independent mechanism that works prior to the proviral integration, together exert efficient antiretroviral effects in infected target cells. Selectively targets single-stranded DNA and does not deaminate double-stranded DNA or single- or double-stranded RNA. Exhibits antiviral activity against simian immunodeficiency virus (SIV), hepatitis B virus (HBV), herpes simplex virus 1 (HHV-1) and Epstein-Barr virus (EBV) and may inhibit the mobility of LTR and non-LTR retrotransposons. May also play a role in the epigenetic regulation of gene expression through the process of active DNA demethylation. In Homo sapiens (Human), this protein is DNA dC-&gt;dU-editing enzyme APOBEC-3C (APOBEC3C).